Consider the following 259-residue polypeptide: Probable ABC transporter permease protein RT0041 (259 aa).

5 helical membrane passes run 20-40 (VGIFALFSFIAISSIIKPPLY), 49-69 (LFIGFHSLPVVAMTTFFSGAV), 148-168 (VIAAIITMPCLVLIGDVIGVM), 195-215 (LIDVISGLVKATVFGFIISII), and 237-257 (AVVNSSILILISNYLITELLF).

The protein belongs to the MlaE permease family.

Its subcellular location is the cell inner membrane. Its function is as follows. Could be part of an ABC transporter complex. The protein is Probable ABC transporter permease protein RT0041 of Rickettsia typhi (strain ATCC VR-144 / Wilmington).